Here is a 224-residue protein sequence, read N- to C-terminus: Triosephosphate isomerase (224 aa).

9-11 (NFK) is a substrate binding site. His-93 functions as the Electrophile in the catalytic mechanism. Glu-141 functions as the Proton acceptor in the catalytic mechanism. Residues Ile-146, Gly-181, and 202–203 (AS) contribute to the substrate site.

Belongs to the triosephosphate isomerase family. As to quaternary structure, homotetramer; dimer of dimers.

It localises to the cytoplasm. It catalyses the reaction D-glyceraldehyde 3-phosphate = dihydroxyacetone phosphate. Its pathway is carbohydrate biosynthesis; gluconeogenesis. It functions in the pathway carbohydrate degradation; glycolysis; D-glyceraldehyde 3-phosphate from glycerone phosphate: step 1/1. Functionally, involved in the gluconeogenesis. Catalyzes stereospecifically the conversion of dihydroxyacetone phosphate (DHAP) to D-glyceraldehyde-3-phosphate (G3P). This chain is Triosephosphate isomerase, found in Pyrobaculum arsenaticum (strain DSM 13514 / JCM 11321 / PZ6).